A 196-amino-acid polypeptide reads, in one-letter code: Serine/arginine-rich splicing factor RSZ22A (196 aa).

In terms of domain architecture, RRM spans 2–71 (SRVYVGNLDP…NGWRVEQSHN (70 aa)). Serine 48 bears the Phosphoserine mark. Positions 58 to 70 (VDGKNGWRVEQSH) are enriched in basic and acidic residues. Positions 58-196 (VDGKNGWRVE…GLKDVRRSRS (139 aa)) are disordered. Gly residues predominate over residues 72 to 87 (RGGGGGRGGGRGGGDG). Basic and acidic residues predominate over residues 88 to 100 (GRGRGGSDLKCYE). The CCHC-type zinc finger occupies 96–113 (LKCYECGESGHFARECRS). Residues 119–135 (GRRRSRSRSRSPPRYRK) are compositionally biased toward basic residues. Phosphoserine is present on residues serine 136, serine 144, serine 146, serine 151, serine 159, serine 170, and serine 196. The segment covering 139–149 (YGGRRSYSPRA) has biased composition (low complexity).

The protein belongs to the splicing factor SR family. RSZ subfamily. Component of the spliceosome. Post-translationally, extensively phosphorylated on serine residues in the RS domain.

The protein localises to the nucleus. Probably involved in intron recognition and spliceosome assembly. This chain is Serine/arginine-rich splicing factor RSZ22A (RSZ22A), found in Arabidopsis thaliana (Mouse-ear cress).